A 246-amino-acid chain; its full sequence is Probable transcriptional regulatory protein WP1214 (246 aa).

The tract at residues 1–22 is disordered; sequence MAGHSQFSNIKHRKGAQDAKRS.

The protein belongs to the TACO1 family.

The protein localises to the cytoplasm. The sequence is that of Probable transcriptional regulatory protein WP1214 from Wolbachia pipientis subsp. Culex pipiens (strain wPip).